A 481-amino-acid polypeptide reads, in one-letter code: Argininosuccinate lyase (481 aa).

Belongs to the lyase 1 family. Argininosuccinate lyase subfamily.

The protein resides in the cytoplasm. It carries out the reaction 2-(N(omega)-L-arginino)succinate = fumarate + L-arginine. Its pathway is amino-acid biosynthesis; L-arginine biosynthesis; L-arginine from L-ornithine and carbamoyl phosphate: step 3/3. This is Argininosuccinate lyase from Kineococcus radiotolerans (strain ATCC BAA-149 / DSM 14245 / SRS30216).